The primary structure comprises 1180 residues: Neurexin like receptor 1 (1180 aa).

The first 20 residues, 1-20, serve as a signal peptide directing secretion; it reads MSGLCLVLLLSIFAVSQSSG. Residues 21–1108 are Extracellular-facing; the sequence is ECSDVSFSSV…SQNKQDLVSK (1088 aa). In terms of domain architecture, Laminin G-like 1 spans 124–290; it reads PITAFDDSSY…LSPNEVHNQC (167 aa). An N-linked (GlcNAc...) asparagine glycan is attached at asparagine 229. An intrachain disulfide couples cysteine 267 to cysteine 290. Asparagine 302, asparagine 336, asparagine 355, and asparagine 436 each carry an N-linked (GlcNAc...) asparagine glycan. The 38-residue stretch at 444–481 folds into the EGF-like 1 domain; sequence FQEKCLPNPCENGGGCVQSALDDYVCNCKEGYKGKNCH. Intrachain disulfides connect cysteine 448–cysteine 459, cysteine 453–cysteine 469, and cysteine 471–cysteine 480. N-linked (GlcNAc...) asparagine glycans are attached at residues asparagine 522 and asparagine 636. The 169-residue stretch at 695–863 folds into the Laminin G-like 2 domain; the sequence is TFDPVTFSNR…GVAIGDDGYC (169 aa). In terms of domain architecture, EGF-like 2 spans 859–896; the sequence is DDGYCRPDLCQNGGQCVDKYDGYVCDCSMTPFGGSDCT. Disulfide bonds link cysteine 863–cysteine 874, cysteine 868–cysteine 883, and cysteine 885–cysteine 895. N-linked (GlcNAc...) asparagine glycosylation is found at asparagine 933, asparagine 949, asparagine 978, asparagine 997, asparagine 1011, and asparagine 1052. The chain crosses the membrane as a helical span at residues 1109–1129; that stretch reads AIIGGGILALSLFILCMSSLI. At 1130-1180 the chain is on the cytoplasmic side; the sequence is CYMRSRPEGVYKTNETGENCSPSRSEEPLVHNTTSNNNNNPTYASNKEYFC. Polar residues predominate over residues 1142-1152; sequence TNETGENCSPS. The disordered stretch occupies residues 1142 to 1180; the sequence is TNETGENCSPSRSEEPLVHNTTSNNNNNPTYASNKEYFC. Over residues 1161–1171 the composition is skewed to low complexity; sequence NTTSNNNNNPT.

This sequence belongs to the neurexin family. In terms of assembly, interacts (via the intracellular domain) with F-actin; the interaction is required for anchoring F-actin at the membrane for gap junction formation. In terms of tissue distribution, highly expressed in pharyngeal g1 and g2 gland cells, pharyngeal muscle cells and the unilateral GABAergic RIS interneuron (at protein level). Expressed in pm5 pharyngeal muscle cells and the nerve ring.

It is found in the cell membrane. The protein resides in the cell junction. Its subcellular location is the gap junction. In terms of biological role, required for gap junction formation, playing a role in anchoring the cytoskeletal component F-actin to the membrane of adjacent cells and thus facilitating the formation of gap junction channels in embryonic cells, muscle cells and neuronal cells. Plays a role in maintaining gap junction activity to promote pharyngeal muscle contraction. This chain is Neurexin like receptor 1, found in Caenorhabditis elegans.